We begin with the raw amino-acid sequence, 432 residues long: MGARVQVQHYNLGSSDSYIATSLHDLNSVDGPPRDIDGIGGAVGRDGDSLDNDGDSSSADCMHESYRNSMQIGVEEGGSNMENKGSAYIMLNIEDVSPIEAARGRFLQIILDYFISQHVIEVCESKRDHDVDSGGRDSNSKVKRKSDDTRYEGDPSFALPLMYIANLYETLVGEANVRLASLNGIRDKTIGVALEAAGGLYRKLTKKFPKKGTCMYRRRELATSVETRTRFPELVIHEEKRVRFVVVNGLDIVEKPSDLPIEEAEWFKRLTGRNEVAISARDYKFYCPRRKHRRLQNSVSSINGLPTFPGIDSSTLANTQGFREDQSQQQHTPSPSKHHMSSLSHQFHQSIHQSHQHHQSIYQSQHAATHYPSQNHQCDPELSHTQMACLQPLTGGHVMPNSPAKFCDQCGAQYLRETSKFCSECGSKRLGI.

3 disordered regions span residues 37 to 61 (DGIGGAVGRDGDSLDNDGDSSSADC), 127 to 151 (RDHDVDSGGRDSNSKVKRKSDDTRY), and 298 to 378 (SVSS…NHQC). Positions 312 to 335 (DSSTLANTQGFREDQSQQQHTPSP) are enriched in polar residues. Positions 341 to 366 (SSLSHQFHQSIHQSHQHHQSIYQSQH) are enriched in low complexity.

This is an uncharacterized protein from Arabidopsis thaliana (Mouse-ear cress).